We begin with the raw amino-acid sequence, 511 residues long: Exodeoxyribonuclease 7 large subunit (511 aa).

It belongs to the XseA family. In terms of assembly, heterooligomer composed of large and small subunits.

It is found in the cytoplasm. It carries out the reaction Exonucleolytic cleavage in either 5'- to 3'- or 3'- to 5'-direction to yield nucleoside 5'-phosphates.. Bidirectionally degrades single-stranded DNA into large acid-insoluble oligonucleotides, which are then degraded further into small acid-soluble oligonucleotides. This Brucella suis biovar 1 (strain 1330) protein is Exodeoxyribonuclease 7 large subunit.